A 142-amino-acid polypeptide reads, in one-letter code: Hemoglobin subunit alpha-2 (142 aa).

S1 bears the N-acetylserine mark. The Globin domain occupies 1-142 (SLSTKDKETV…LSRALSEKYR (142 aa)). H59 is an O2 binding site. H88 lines the heme b pocket.

Belongs to the globin family. As to quaternary structure, hb2 is a heterotetramer of two alpha-2 chains and two beta chains. As to expression, red blood cells.

In terms of biological role, involved in oxygen transport from gills to the various peripheral tissues. This chain is Hemoglobin subunit alpha-2 (hba2), found in Trematomus newnesi (Dusky notothen).